A 424-amino-acid chain; its full sequence is MKQFIVFILSLYTTLSWAVLEVTIFKQEENTFPIVISDFFVVGDASQGKVIADIMRNNFNRSGEFSVVNANYIIRSKPSFDKWKAKKIEAIVLGKLEKISKKIFNVEIELLDVYSKKTLYKDIFTVHNSGIRRIAHYLSDQIYHALLGKRGFFNTRLAYITVINKDKGEREYRLEISDSDAQNPQTILKSREPLLSPVWSPKQDKIAYVSFKNSRSEVFIQYPFIRRKIQKLPYFDGIASSPSWHPNGEILLLTLSKNGNKDIYSYQLSSKKLTRLTIDMGIDTEASYSPDGNKIIFTSNRSGQVQVYIKDLKTNKINRATFKGRYNAQAVFSPDGKSLIMVHKIDQDYRIALLDIATKDLKVMTNNQLDESPFFSPNGDMIIFATNQGGFGVLSVVSIWGRQIFELTSKVGEVREPNWSHYLK.

The first 20 residues, 1–20 (MKQFIVFILSLYTTLSWAVL), serve as a signal peptide directing secretion.

It belongs to the TolB family. As to quaternary structure, the Tol-Pal system is composed of five core proteins: the inner membrane proteins TolA, TolQ and TolR, the periplasmic protein TolB and the outer membrane protein Pal. They form a network linking the inner and outer membranes and the peptidoglycan layer.

Its subcellular location is the periplasm. Its function is as follows. Part of the Tol-Pal system, which plays a role in outer membrane invagination during cell division and is important for maintaining outer membrane integrity. The sequence is that of Tol-Pal system protein TolB from Vesicomyosocius okutanii subsp. Calyptogena okutanii (strain HA).